We begin with the raw amino-acid sequence, 287 residues long: Syntaxin-11 (287 aa).

The stretch at 41 to 71 (LESLYRDIRDIQDENQLLVADVKRLGKQNAR) forms a coiled coil. The region spanning 204–266 (LNEIESRHRE…GQAKAQVRKA (63 aa)) is the t-SNARE coiled-coil homology domain.

It belongs to the syntaxin family. As to quaternary structure, interacts with the SNARE proteins SNAP-23 and VAMP.

It localises to the membrane. It is found in the golgi apparatus. The protein resides in the trans-Golgi network membrane. In terms of biological role, SNARE that acts to regulate protein transport between late endosomes and the trans-Golgi network. In Homo sapiens (Human), this protein is Syntaxin-11 (STX11).